Here is a 143-residue protein sequence, read N- to C-terminus: FAD synthase (143 aa).

Residues 10-11, 15-18, and Asp-93 contribute to the ATP site; these read TF and HPGH.

The protein belongs to the archaeal FAD synthase family. In terms of assembly, homodimer. It depends on a divalent metal cation as a cofactor.

It catalyses the reaction FMN + ATP + H(+) = FAD + diphosphate. It participates in cofactor biosynthesis; FAD biosynthesis; FAD from FMN: step 1/1. Its function is as follows. Catalyzes the transfer of the AMP portion of ATP to flavin mononucleotide (FMN) to produce flavin adenine dinucleotide (FAD) coenzyme. The protein is FAD synthase of Haloterrigena turkmenica (strain ATCC 51198 / DSM 5511 / JCM 9101 / NCIMB 13204 / VKM B-1734 / 4k) (Halococcus turkmenicus).